A 446-amino-acid chain; its full sequence is N-succinylarginine dihydrolase (446 aa).

Substrate is bound by residues 19–28 (AGLSFGNEAS), Asn110, and 137–138 (HR). Glu174 is an active-site residue. A substrate-binding site is contributed by Arg213. The active site involves His249. Positions 251 and 364 each coordinate substrate. The Nucleophile role is filled by Cys370.

This sequence belongs to the succinylarginine dihydrolase family. In terms of assembly, homodimer.

The catalysed reaction is N(2)-succinyl-L-arginine + 2 H2O + 2 H(+) = N(2)-succinyl-L-ornithine + 2 NH4(+) + CO2. The protein operates within amino-acid degradation; L-arginine degradation via AST pathway; L-glutamate and succinate from L-arginine: step 2/5. In terms of biological role, catalyzes the hydrolysis of N(2)-succinylarginine into N(2)-succinylornithine, ammonia and CO(2). The chain is N-succinylarginine dihydrolase from Acinetobacter baylyi (strain ATCC 33305 / BD413 / ADP1).